Reading from the N-terminus, the 126-residue chain is Putative 15 kDa capsid protein (126 aa).

It is found in the virion. This chain is Putative 15 kDa capsid protein (P15), found in Bombyx mori nuclear polyhedrosis virus (BmNPV).